We begin with the raw amino-acid sequence, 433 residues long: O-methyltransferase VdtC (433 aa).

S-adenosyl-L-methionine is bound at residue Asp284. His335 (proton acceptor) is an active-site residue.

Belongs to the class I-like SAM-binding methyltransferase superfamily. Cation-independent O-methyltransferase family. COMT subfamily.

It catalyses the reaction 7,9,10-trihydroxy-3-(2-oxopropyl)-1H-benzo[g]isochromen-1-one + S-adenosyl-L-methionine = 9,10-dihydroxy-7-methoxy-3-(2-oxopropyl)-1H-benzo[g]isochromen-1-one + S-adenosyl-L-homocysteine + H(+). It participates in secondary metabolite biosynthesis. In terms of biological role, O-methyltransferase; part of the gene cluster that mediates the biosynthesis of viriditoxin, one of the 'classical' secondary metabolites produced by fungi and that has antibacterial activity. The first step is performed by the polyketide synthase VdtA which condenses one acetyl-CoA and 6 malonyl-CoA units to form the heptaketide monomer backbone of viriditoxin. The product of VdtA is then O-methylated on C7 by the O-methyltransferase VdtC. The O-methyl group is important for the stereoselective coupling of the monomers at the final step of viriditoxin biosynthesis. The short-chain dehydrogenase/reductase VdtF then acts as a stereospecific reductase converting the pyrone to dihydropyrone via the reduction of the C3-C4 double bond. The FAD-binding monooxygenase VdtE then converts the ketone group into a methyl-ester group to yield semi-viriditoxin. Finally, the laccase VdtB is involved in dimerization of 2 semi-viriditoxin molecules to yield the final viriditoxin. VdtB is responsible for the regioselective 6,6'-coupling of semi-viriditoxin, which yields (M)-viriditoxin and (P)-viriditoxin at a ratio of 1:2. The non-catalytic carboxylesterase-like protein VdtD affects the stereochemistical outcome of the coupling. The highly reducing polyketide synthase VdtX is not involved in viriditoxin synthesis, but might possibly play a role in the production of additional metabolites not identified yet. In Byssochlamys spectabilis (Paecilomyces variotii), this protein is O-methyltransferase VdtC.